We begin with the raw amino-acid sequence, 180 residues long: MNPAPNLVMVGPMGAGKSCIGRRLAERFGLEFVDVDQAIVEQVGSSIPAIFEQHGEARFRQHEAETLQALLEQDNKLISTGGGAVLDPRNRERICARGFVVYLHVSVPAQLTRLARDRNRPLLQRADREQVLHAMAAHRTPLYHQVADLSLETDHLSPAEATAQLVLRLAAQWRMSSNPA.

ATP is bound at residue 14 to 19; it reads GAGKSC. Ser18 contacts Mg(2+). Positions 36, 60, and 82 each coordinate substrate. Residue Arg120 participates in ATP binding. Arg139 contributes to the substrate binding site.

It belongs to the shikimate kinase family. In terms of assembly, monomer. The cofactor is Mg(2+).

It is found in the cytoplasm. It carries out the reaction shikimate + ATP = 3-phosphoshikimate + ADP + H(+). Its pathway is metabolic intermediate biosynthesis; chorismate biosynthesis; chorismate from D-erythrose 4-phosphate and phosphoenolpyruvate: step 5/7. Catalyzes the specific phosphorylation of the 3-hydroxyl group of shikimic acid using ATP as a cosubstrate. This is Shikimate kinase from Xanthomonas axonopodis pv. citri (strain 306).